The chain runs to 83 residues: Cardiotoxin 7a (83 aa).

A signal peptide spans 1-21 (MKTLLLTLVVVTIVCLDLGYT). 4 cysteine pairs are disulfide-bonded: C24/C43, C36/C61, C65/C76, and C77/C82.

It belongs to the three-finger toxin family. Short-chain subfamily. Orphan group XV sub-subfamily. Expressed by the venom gland.

It localises to the secreted. The protein resides in the target cell membrane. Has low cytotoxic activity. The polypeptide is Cardiotoxin 7a (Naja atra (Chinese cobra)).